A 601-amino-acid chain; its full sequence is Translation initiation factor IF-2 (601 aa).

Positions 54 to 101 (GHTASAEPAPAQASGSPASPAQTEAQEAPQPTATATAEREPAAPPARE) are disordered. Residues 57-89 (ASAEPAPAQASGSPASPAQTEAQEAPQPTATAT) show a composition bias toward low complexity. A tr-type G domain is found at 104 to 273 (HRAPVVTIMG…SLTAELEDLR (170 aa)). Positions 113-120 (GHVDHGKT) are G1. 113–120 (GHVDHGKT) contributes to the GTP binding site. The interval 138-142 (GITQH) is G2. The G3 stretch occupies residues 159–162 (DTPG). GTP is bound by residues 159–163 (DTPGH) and 213–216 (NKVD). A G4 region spans residues 213 to 216 (NKVD). The interval 249 to 251 (SAK) is G5.

It belongs to the TRAFAC class translation factor GTPase superfamily. Classic translation factor GTPase family. IF-2 subfamily.

It localises to the cytoplasm. In terms of biological role, one of the essential components for the initiation of protein synthesis. Protects formylmethionyl-tRNA from spontaneous hydrolysis and promotes its binding to the 30S ribosomal subunits. Also involved in the hydrolysis of GTP during the formation of the 70S ribosomal complex. This Deinococcus geothermalis (strain DSM 11300 / CIP 105573 / AG-3a) protein is Translation initiation factor IF-2.